Reading from the N-terminus, the 303-residue chain is Taste receptor type 2 member 13 (303 aa).

Residues 1 to 7 (MESALPS) are Extracellular-facing. The chain crosses the membrane as a helical span at residues 8-28 (IFTLVIIAEFIIGNLSNGFIV). Residues 29-55 (LINCIDWVSKRELSSVDKLLIILAISR) are Cytoplasmic-facing. The helical transmembrane segment at 56–76 (IGLIWEILVSWFLALHSLAIF) threads the bilayer. Over 77-85 (VSGTGLRIM) the chain is Extracellular. Residues 86–106 (IFSWIVSNHFNLWLATILSIF) form a helical membrane-spanning segment. The Cytoplasmic portion of the chain corresponds to 107-128 (YLLKIASFSSPAFLYLKRRVNK). A helical membrane pass occupies residues 129–149 (VILMILLGTLVFLFLNLIQIN). The Extracellular portion of the chain corresponds to 150 to 184 (MLIKDWLDRYERNTTWNFSMSDFETFSVSVRFTMT). Asparagine 162 and asparagine 166 each carry an N-linked (GlcNAc...) asparagine glycan. A helical membrane pass occupies residues 185–205 (MFSLTPFTVAFISFLLLVFSL). The Cytoplasmic portion of the chain corresponds to 206-232 (QKHLQKMQLNYKGHRDPRTKVHTNALK). Residues 233-253 (IVISFLLLYASFFLSILISWI) traverse the membrane as a helical segment. The Extracellular portion of the chain corresponds to 254–261 (SELYQNTV). A helical transmembrane segment spans residues 262-282 (IYMLCETIGAFYPSSHSFLLI). The Cytoplasmic segment spans residues 283–303 (LGNAKLRQAFLLVAAKVWAKR).

This sequence belongs to the G-protein coupled receptor T2R family.

The protein localises to the membrane. Functionally, receptor that may play a role in the perception of bitterness and is gustducin-linked. May play a role in sensing the chemical composition of the gastrointestinal content. The activity of this receptor may stimulate alpha gustducin, mediate PLC-beta-2 activation and lead to the gating of TRPM5. This Pan troglodytes (Chimpanzee) protein is Taste receptor type 2 member 13 (TAS2R13).